A 1405-amino-acid polypeptide reads, in one-letter code: DNA-directed RNA polymerase subunit beta' (1405 aa).

Zn(2+)-binding residues include Cys-70, Cys-72, Cys-85, and Cys-88. The Mg(2+) site is built by Asp-460, Asp-462, and Asp-464. Zn(2+) contacts are provided by Cys-815, Cys-890, Cys-897, and Cys-900.

The protein belongs to the RNA polymerase beta' chain family. As to quaternary structure, the RNAP catalytic core consists of 2 alpha, 1 beta, 1 beta' and 1 omega subunit. When a sigma factor is associated with the core the holoenzyme is formed, which can initiate transcription. Requires Mg(2+) as cofactor. The cofactor is Zn(2+).

The enzyme catalyses RNA(n) + a ribonucleoside 5'-triphosphate = RNA(n+1) + diphosphate. Functionally, DNA-dependent RNA polymerase catalyzes the transcription of DNA into RNA using the four ribonucleoside triphosphates as substrates. The sequence is that of DNA-directed RNA polymerase subunit beta' from Xanthomonas campestris pv. campestris (strain B100).